A 240-amino-acid chain; its full sequence is Probable transcriptional regulatory protein HPP12_0160 (240 aa).

The protein belongs to the TACO1 family.

Its subcellular location is the cytoplasm. The protein is Probable transcriptional regulatory protein HPP12_0160 of Helicobacter pylori (strain P12).